Reading from the N-terminus, the 777-residue chain is Translation initiation factor IF-2 (777 aa).

Disordered stretches follow at residues 30–54 and 98–117; these read SPSM…QDEN and EDSN…SFKE. The span at 98-109 shows a compositional bias: basic and acidic residues; the sequence is EDSNEKTNDRDS. One can recognise a tr-type G domain in the interval 279–449; that stretch reads PKPPIVTFMG…LLIAELMKLE (171 aa). The G1 stretch occupies residues 288–295; it reads GHVDHGKT. 288-295 serves as a coordination point for GTP; the sequence is GHVDHGKT. The G2 stretch occupies residues 313–317; it reads GITQH. A G3 region spans residues 334 to 337; that stretch reads DTPG. GTP contacts are provided by residues 334-338 and 388-391; these read DTPGH and NKID. Residues 388-391 are G4; sequence NKID. Residues 425–427 form a G5 region; it reads SAK.

The protein belongs to the TRAFAC class translation factor GTPase superfamily. Classic translation factor GTPase family. IF-2 subfamily.

It is found in the cytoplasm. Functionally, one of the essential components for the initiation of protein synthesis. Protects formylmethionyl-tRNA from spontaneous hydrolysis and promotes its binding to the 30S ribosomal subunits. Also involved in the hydrolysis of GTP during the formation of the 70S ribosomal complex. The chain is Translation initiation factor IF-2 from Wolbachia sp. subsp. Brugia malayi (strain TRS).